Here is a 581-residue protein sequence, read N- to C-terminus: Myoneurin (581 aa).

The region spanning 24 to 89 is the BTB domain; that stretch reads CDCTIVIGEF…IYTGTLNLDS (66 aa). Residues 167–193 form a disordered region; sequence PKQGALAKKSSQTKKKKKAFNSQKTGQ. 2 consecutive short sequence motifs (nuclear localization signal) follow at residues 174 to 190 and 256 to 261; these read KKSS…NSQK and KRKRGK. Serine 288 is modified (phosphoserine). C2H2-type zinc fingers lie at residues 301 to 323, 329 to 351, 357 to 380, 386 to 408, 414 to 436, 442 to 464, and 470 to 493; these read PMCN…MRIH, YVCH…VRTH, YKCE…RMHH, YKCD…ARKH, YVCD…VRRH, YVCD…SRKH, and FICE…TKVH.

This sequence belongs to the krueppel C2H2-type zinc-finger protein family.

The protein localises to the nucleus. This chain is Myoneurin (MYNN), found in Bos taurus (Bovine).